The chain runs to 728 residues: Fibulin-1 (728 aa).

An N-terminal signal peptide occupies residues 1 to 17; that stretch reads MRICFLLLAFLVAETFA. Intrachain disulfides connect cysteine 23–cysteine 49, cysteine 24–cysteine 56, cysteine 37–cysteine 57, cysteine 66–cysteine 94, cysteine 79–cysteine 95, cysteine 97–cysteine 121, cysteine 98–cysteine 128, cysteine 111–cysteine 129, cysteine 159–cysteine 168, cysteine 164–cysteine 178, cysteine 180–cysteine 279, cysteine 285–cysteine 298, cysteine 292–cysteine 307, cysteine 347–cysteine 359, cysteine 353–cysteine 368, cysteine 375–cysteine 388, cysteine 394–cysteine 404, cysteine 399–cysteine 413, cysteine 415–cysteine 428, cysteine 434–cysteine 448, cysteine 442–cysteine 457, cysteine 459–cysteine 472, cysteine 478–cysteine 489, cysteine 485–cysteine 498, cysteine 500–cysteine 513, cysteine 519–cysteine 534, cysteine 530–cysteine 543, cysteine 545–cysteine 558, cysteine 564–cysteine 576, and cysteine 569–cysteine 585. 3 consecutive Anaphylatoxin-like domains span residues 23-64, 65-96, and 97-129; these read CCAG…LLDN, ACDS…ECCD, and CCLL…NKCC. Residues 155-194 form the EGF-like 1 domain; sequence LGDRCASSHCEHLCHDRGGEKVECSCRSGFDLAPDGMACV. One can recognise an EGF-like 2; calcium-binding domain in the interval 195–280; sequence DRNECLTRQS…GWLFQHGHCV (86 aa). Residues 281–344 form the EGF-like 3; calcium-binding domain; sequence DVDECNLGSH…YPKNGMCNDI (64 aa). In terms of domain architecture, EGF-like 4; calcium-binding spans 343–389; sequence DIDECVTGHNCGAGEECVNTPGSFRCQQKGNLCAHGYEVNGATGFCE. The EGF-like 5; calcium-binding domain occupies 390 to 429; the sequence is DVNECQQGVCGSMECINLPGTYKCKCGPGYEFNDAKKRCE. In terms of domain architecture, EGF-like 6; calcium-binding spans 430 to 473; it reads DVDECIKFAGHVCDLSAECINTIGSFECKCKPGFQLASDGRRCE. An EGF-like 7; calcium-binding domain is found at 474 to 514; the sequence is DVNECTTGIAACEQKCVNIPGSYQCICDRGFALGPDGTKCE. One can recognise an EGF-like 8; calcium-binding domain in the interval 515 to 559; sequence DIDECSIWAGSGNDLCMGGCINTKGSYLCQCPPGYKIQPDGRTCV. The 51-residue stretch at 560–610 folds into the EGF-like 9; calcium-binding domain; the sequence is DVDECAMGECAGSDKVCVNTLGSFKCHSIDCPTNYIHDSLNKNQIADGYSC. A glycan (N-linked (GlcNAc...) asparagine) is linked at asparagine 624.

It belongs to the fibulin family. In terms of assembly, homomultimerizes and interacts with various extracellular matrix components. Expressed in head muscle cells, anterior and posterior intestinal cells. Isoform a: Expressed in male and hermaphrodite gonad, anterior and posterior intestine and pharyngeal basement membranes, body-wall muscle, GLR cells, uterine attachment and mechanosensory neurons. Isoform c: Expressed on ALM/PLM mechanosensory neuron attachments, in flexible tracks connecting the pharyngeal, body-wall-muscle basement membranes and in uterine attachments.

The protein localises to the secreted. The protein resides in the extracellular space. It is found in the extracellular matrix. It localises to the basement membrane. In terms of biological role, incorporated into fibronectin-containing matrix fibers. Plays a role in cell adhesion and migration along protein fibers within the extracellular matrix (ECM). Important for certain developmental processes and contributes to the supramolecular organization of ECM architecture, in particular to those of basement membranes. Its function is as follows. Involved in regulating the shape and adhesion of cells in the developing pharynx, intestine, body-wall muscle and gonadal tissue. During gonadogenesis, regulates the width of gonads and the migration of distal tip cells (DTC). Together with type IV collagen let-2 and downstream of metalloprotease mig-17, recruits nidogen nid-1 to the gonad basement membrane thereby inducing basement membrane remodeling required for the directional migration of DTCs. Acts antagonistically with metalloprotease gon-1 to maintain optimal levels of type IV collagen emb-9 in the gonad basement membrane during gonadogenesis. Required for larval development. Involved in the assembly of the flexible hemicentin-containing tracks found joining the pharynx and body-wall-muscle basement membranes. This Caenorhabditis elegans protein is Fibulin-1 (fbl-1).